The sequence spans 847 residues: Alpha-glucuronidase (847 aa).

The first 19 residues, 1–19, serve as a signal peptide directing secretion; it reads MVIRSLLLLLLAAIVPVFA. 8 N-linked (GlcNAc...) asparagine glycosylation sites follow: Asn52, Asn238, Asn321, Asn353, Asn586, Asn692, Asn740, and Asn767.

Belongs to the glycosyl hydrolase 67 family.

The protein localises to the secreted. The catalysed reaction is an alpha-D-glucuronoside + H2O = D-glucuronate + an alcohol. In terms of biological role, releases 4-O-methylglucuronic acid from xylan. The polypeptide is Alpha-glucuronidase (Hypocrea jecorina (Trichoderma reesei)).